Reading from the N-terminus, the 238-residue chain is MTEVTKNDFTEEGKIVRKIRSFVRREGRLTKGQEGAIQECWPSMGIDFVEQMLDWNEVFGNNNPVVLEIGFGMGASLVEMAKNAPEKNFLGIEVHRPGVGACLAAAKEAGVTNLRVMCHDAVEVFESMIPDSSVNTLQLFFPDPWHKARHHKRRIVKAEFAEMIRPKLIQGGIFHMATDWENYSEHMIEVMNAAPGYENIATDGDFIPRPDERPLTKFEARGHRLGHGVWDIKFRRNA.

The S-adenosyl-L-methionine site is built by E68, E93, D120, and D143. D143 is a catalytic residue. Residues K147, D179, and 216 to 219 (TKFE) each bind substrate.

This sequence belongs to the class I-like SAM-binding methyltransferase superfamily. TrmB family.

The catalysed reaction is guanosine(46) in tRNA + S-adenosyl-L-methionine = N(7)-methylguanosine(46) in tRNA + S-adenosyl-L-homocysteine. It functions in the pathway tRNA modification; N(7)-methylguanine-tRNA biosynthesis. Its function is as follows. Catalyzes the formation of N(7)-methylguanine at position 46 (m7G46) in tRNA. In Aliivibrio fischeri (strain MJ11) (Vibrio fischeri), this protein is tRNA (guanine-N(7)-)-methyltransferase.